Consider the following 329-residue polypeptide: tRNA N6-adenosine threonylcarbamoyltransferase (329 aa).

Fe cation is bound by residues His-110 and His-114. Residues 132–136, Asp-165, Gly-178, and Asn-271 contribute to the substrate site; that span reads VISGG. Residue Asp-299 coordinates Fe cation.

It belongs to the KAE1 / TsaD family. Requires Fe(2+) as cofactor.

Its subcellular location is the cytoplasm. It catalyses the reaction L-threonylcarbamoyladenylate + adenosine(37) in tRNA = N(6)-L-threonylcarbamoyladenosine(37) in tRNA + AMP + H(+). Functionally, required for the formation of a threonylcarbamoyl group on adenosine at position 37 (t(6)A37) in tRNAs that read codons beginning with adenine. Is involved in the transfer of the threonylcarbamoyl moiety of threonylcarbamoyl-AMP (TC-AMP) to the N6 group of A37, together with TsaE and TsaB. TsaD likely plays a direct catalytic role in this reaction. This chain is tRNA N6-adenosine threonylcarbamoyltransferase, found in Neorickettsia sennetsu (strain ATCC VR-367 / Miyayama) (Ehrlichia sennetsu).